A 1687-amino-acid polypeptide reads, in one-letter code: Zinc finger protein 142 (1687 aa).

Disordered stretches follow at residues 1-23 and 83-150; these read MTDPLLDSQPASSTGEMDGLCPE and TLTP…RLEG. Basic and acidic residues predominate over residues 125–140; it reads KEEKSDTQKDSQKAVD. Serine 154 bears the Phosphoserine mark. C2H2-type zinc fingers lie at residues 163 to 185, 219 to 242, and 253 to 275; these read HMCPECKRCFKKRTHLVEHLHLH, HHCPLCHYSAVERNALNRHMASMH, and YACPVCREEFRLSQALKEHLKSH. The segment at 286-311 adopts a C2H2-type 4; atypical zinc-finger fold; sequence LRCFQEGCSYAAPDRKAFIKHLKETH. C2H2-type zinc fingers lie at residues 316 to 340, 343 to 366, 372 to 395, 401 to 423, 429 to 451, 457 to 479, 485 to 507, 512 to 536, 544 to 567, and 573 to 596; these read VECRHHSCPMLFATAEAMEAHHKSH, FHCPHCDFACSNKHLFRKHKKQGH, LRCTFCPFATFNPVAYQDHVGKMH, HQCPECNFATAHKRVLIRHMLLH, HKCELCDFTCRDVSYLSKHMLTH, YMCTECGYVTKWKHYLRVHMRKH, YQCNQCSYRCHRADQLSSHKLRH, LMCEVCAFACKRKYELQKHMASQHH, YPCHYCSYQSRHKQAVLSHENCKH, and FHCALCDYRTFSNTTLLFHKRKAH. Residue lysine 594 forms a Glycyl lysine isopeptide (Lys-Gly) (interchain with G-Cter in SUMO2) linkage. 5 disordered regions span residues 613-690, 704-798, 897-935, 947-1014, and 1052-1092; these read EPEG…EVEE, LESV…PPLP, KGLPRPDSPIPLQPVLPGTQASEDTESGKPPPASQEAEL, REPE…SPTE, and GRGG…GDGD. Low complexity predominate over residues 725–739; the sequence is PLGLEGPDGLEGPEL. The segment covering 1061 to 1075 has biased composition (polar residues); that stretch reads TPQTQPDVSPLSNGD. Residues 1082–1092 show a composition bias toward low complexity; it reads GSTESSSGDGD. C2H2-type zinc fingers lie at residues 1135–1158, 1171–1194, 1200–1222, 1228–1251, 1257–1280, 1286–1309, 1328–1351, 1354–1377, 1380–1403, 1424–1446, 1452–1474, 1480–1502, 1508–1530, 1536–1559, and 1565–1587; these read LHCSLCPFTAPAATALRLHQKRRH, LQCGDCGFTCKQSRCMQQHRRLKH, HQCPFCDFSTTRRYRLEAHQSRH, IPCSSCPQTFGTNSKLRLHRLRVH, HFCPLCDYSGYLRHDITRHVNSCH, FACSQCEAQFSSETALKQHALRRH, LHCSRCGLLCPSPASLRGHTRKQH, LECGACQEAFPSRLALDEHRRQQH, HRCQLCDFAARERVGLVKHYLEQH, LHCPFCDFTCRHQLVLDHHVKGH, YKCTDCAYSTKNRQKITWHSRIH, YHCHLCPYACADPSRLKYHMRIH, YLCPECGYKCKWVNQLKYHMTKH, YQCPECEYCTNRADALRVHQETRH, and FMCEQCGKAFKTRFLLRTHLRKH. Lysine 1193 is covalently cross-linked (Glycyl lysine isopeptide (Lys-Gly) (interchain with G-Cter in SUMO2)). A Glycyl lysine isopeptide (Lys-Gly) (interchain with G-Cter in SUMO2) cross-link involves residue lysine 1242. Lysine 1591 participates in a covalent cross-link: Glycyl lysine isopeptide (Lys-Gly) (interchain with G-Cter in SUMO2). 2 C2H2-type zinc fingers span residues 1593 to 1615 and 1621 to 1643; these read YVCNVCHRAFRWAAGLRHHALTH and FFCRLCNYKAKQKFQVVKHVRRH. A disordered region spans residues 1638-1687; the sequence is KHVRRHHPDQADPNQGVGKDPTTPTVHLHDVQLEDPSPPAPAAPHTGPEG.

This sequence belongs to the krueppel C2H2-type zinc-finger protein family.

The protein localises to the nucleus. May be involved in transcriptional regulation. This chain is Zinc finger protein 142, found in Homo sapiens (Human).